A 1498-amino-acid chain; its full sequence is MDGASAEQDGLQEDRSHSGPSSLPEAPLKPPGPLVPPDQQDKVQCAEVNRASTEGESPDGPGQGGLCQNGPTPPFPDPPSSLDPTTSPVGPDASPGVAGFHDNLRKSQGTSAEGSVRKEALQSLRLSLPMQETQLCSTDSPLPLEKEEQVRLQARKWLEEQLKQYRVKRQQERSSQPATKTRLFSTLDPELMLNPENLPRASTLAMTKEYSFLRTSVPRGPKVGSLGLPAHPREKKTSKSSKIRSLADYRTEDSNAGNSGGNVPAPDSTKGSLKQNRSSAASVVSEISLSPDTDDRLENTSLAGDSVSEVDGNDSDSSSYSSASTRGTYGILSKTVGTQDTPYMVNGQEIPADTLGQFPSIKDVLQAAAAEHQDQGQEVNGEVRSRRDSICSSVSLESSAAETQEEMLQVLKEKMRLEGQLEALSLEASQALKEKAELQAQLAALSTKLQAQVECSHSSQQRQDSLSSEVDTLKQSCWDLERAMTDLQNMLEAKNASLASSNNDLQVAEEQYQRLMAKVEDMQRSMLSKDNTVHDLRQQMTALQSQLQQVQLERTTLTSKLKASQAEISSLQSVRQWYQQQLALAQEARVRLQGEMAHIQVGQMTQAGLLEHLKLENVSLSQQLTETQHRSMKEKGRIAAQLQGIEADMLDQEAAFMQIQEAKTMVEEDLQRRLEEFEGERERLQRMADSAASLEQQLEQVKLTLLQRDQQLEALQQEHLDLMKQLTLTQEALQSREQSLDALQTHYDELQARLGELQGEAASREDTICLLQNEKIILEAALQAAKSGKEELDRGARRLEEGTEETSETLEKLREELAIKSGQVEHLQQETAALKKQMQKIKEQFLQQKVMVEAYRRDATSKDQLISELKATRKRLDSELKELRQELMQVHGEKRTAEAELSRLHREVAQVRQHMADLEGHLQSAQKERDEMETHLQSLQFDKEQMVAVTEANEALKKQIEELQQEARKAITEQKQKMRRLGSDLTSAQKEMKTKHKAYENAVGILSRRLQEALAAKEAADAELGQLRAQGGSSDSSLALHERIQALEAELQAVSHSKTLLEKELQEVIALTSQELEESREKVLELEDELQESRGFRKKIKRLEESNKKLALELEHEKGKLTGLGQSNAALREHNSILETALAKREADLVQLNLQVQAVLQRKEEEDRQMKHLVQALQASLEKEKEKVNSLKEQVAAAKVEAGHNRRHFKAASLELSEVKKELQAKEHLVQKLQAEADDLQIREGKHSQEIAQFQAELAEARAQLQLLQKQLDEQLSKQPVGNQEMENLKWEVDQKEREIQSLKQQLDLTEQQGRKELEGLQQLLQNVKSELEMAQEDLSMTQKDKFMLQAKVSELKNNMKTLLQQNQQLKLDLRRGAAKTRKEPKGEASSSNPATPIKIPDCPVPASLLEELLRPPPAVSKEPLKNLNSCLQQLKQEMDSLQRQMEEHALTVHESLSSWTPLEPATASPVPPGGHAGPRGDPQRHSQSRASKEGPGE.

The residue at position 1 (Met-1) is an N-acetylmethionine. Positions 1-118 are disordered; sequence MDGASAEQDG…GTSAEGSVRK (118 aa). Position 18 is a phosphoserine (Ser-18). The segment covering 27–36 has biased composition (pro residues); it reads PLKPPGPLVP. Ser-57 carries the phosphoserine modification. The span at 71–81 shows a compositional bias: pro residues; that stretch reads PTPPFPDPPSS. The interval 121–141 is interaction with GOPC; the sequence is LQSLRLSLPMQETQLCSTDSP. Disordered regions lie at residues 166 to 195 and 216 to 325; these read RVKR…MLNP and SVPR…SAST. Residues 172 to 257 are golgi-targeting domain; sequence ERSSQPATKT…DYRTEDSNAG (86 aa). 2 stretches are compositionally biased toward polar residues: residues 173–184 and 269–291; these read RSSQPATKTRLF and TKGS…SLSP. Position 272 is a phosphoserine (Ser-272). Residues 315–324 show a composition bias toward low complexity; the sequence is SDSSSYSSAS. Phosphoserine is present on residues Ser-385, Ser-389, and Ser-465. Residues 394 to 1459 adopt a coiled-coil conformation; that stretch reads VSLESSAAET…ALTVHESLSS (1066 aa). A compositionally biased stretch (basic and acidic residues) spans 789–801; the sequence is KEELDRGARRLEE. Disordered stretches follow at residues 789-809, 974-993, 1376-1400, and 1440-1498; these read KEEL…TSET, QKQK…KEMK, RGAA…PIKI, and DSLQ…GPGE. At Ser-983 the chain carries Phosphoserine. The segment covering 1376-1387 has biased composition (basic and acidic residues); it reads RGAAKTRKEPKG. A Phosphoserine modification is found at Ser-1392. Positions 1440–1452 are enriched in basic and acidic residues; that stretch reads DSLQRQMEEHALT.

As to quaternary structure, homodimer. Interacts with GOLGA7. Isoform 1 interacts with GOPC while isoform 3 does not. Cleaved by caspases in apoptotic cells. Expressed in all tissues tested. Expressed in liver, testis, lung, heart, salivary gland and kidney.

It is found in the cytoplasm. It localises to the golgi apparatus. Its subcellular location is the golgi stack membrane. Functionally, golgi auto-antigen; probably involved in maintaining Golgi structure. In Homo sapiens (Human), this protein is Golgin subfamily A member 3 (GOLGA3).